The chain runs to 148 residues: Ribosome maturation factor RimP (148 aa).

Belongs to the RimP family.

The protein resides in the cytoplasm. In terms of biological role, required for maturation of 30S ribosomal subunits. The sequence is that of Ribosome maturation factor RimP from Treponema denticola (strain ATCC 35405 / DSM 14222 / CIP 103919 / JCM 8153 / KCTC 15104).